We begin with the raw amino-acid sequence, 39 residues long: Natriuretic peptide TNPc (39 aa).

C9 and C25 are disulfide-bonded.

Belongs to the natriuretic peptide family. In terms of tissue distribution, expressed by the venom gland.

The protein localises to the secreted. Its function is as follows. Snake venom natriuretic peptide that exhibits vasoactive and hypotensive activity. Produces a near complete relaxation in pre-contracted aortae by activating the natriuretic peptide receptor 1 (NPR1). Stimulates cGMP production through the natriuretic peptide receptor 1 (NPR1) with high potencies for the rat NPR1 (EC(50)=100 nM), and very weak potencies over human NPR1 (28% activation at 10 uM). In vivo, reduces both systolic and diastolic blood pressure with no effect on heart rate, when intravenously injected in conscious rabbits. Also enhances the bradycardia due to cardiac afferent stimulation (Bezold-Jarisch reflex). The sequence is that of Natriuretic peptide TNPc from Oxyuranus microlepidotus (Inland taipan).